The sequence spans 211 residues: Uracil phosphoribosyltransferase (211 aa).

5-phospho-alpha-D-ribose 1-diphosphate-binding positions include R77, R102, and 129–137 (DPMLATGGS). Uracil contacts are provided by residues I192 and 197–199 (GDA). Residue D198 participates in 5-phospho-alpha-D-ribose 1-diphosphate binding.

Belongs to the UPRTase family. The cofactor is Mg(2+).

It catalyses the reaction UMP + diphosphate = 5-phospho-alpha-D-ribose 1-diphosphate + uracil. The protein operates within pyrimidine metabolism; UMP biosynthesis via salvage pathway; UMP from uracil: step 1/1. Allosterically activated by GTP. Functionally, catalyzes the conversion of uracil and 5-phospho-alpha-D-ribose 1-diphosphate (PRPP) to UMP and diphosphate. The sequence is that of Uracil phosphoribosyltransferase from Corynebacterium glutamicum (strain R).